The chain runs to 331 residues: Cytosolic Fe-S cluster assembly factor NBP35 (331 aa).

Positions methionine 1 to lysine 10 are enriched in polar residues. Positions methionine 1–glycine 32 are disordered. Residues cysteine 21, cysteine 35, cysteine 38, and cysteine 44 each coordinate [4Fe-4S] cluster. ATP is bound at residue glycine 75–serine 82. Positions 249 and 252 each coordinate [4Fe-4S] cluster.

Belongs to the Mrp/NBP35 ATP-binding proteins family. NUBP1/NBP35 subfamily. As to quaternary structure, heterotetramer of 2 NBP35 and 2 CFD1 chains. [4Fe-4S] cluster serves as cofactor.

It localises to the cytoplasm. Its subcellular location is the nucleus. Functionally, component of the cytosolic iron-sulfur (Fe/S) protein assembly (CIA) machinery. Required for maturation of extramitochondrial Fe-S proteins. The NBP35-CFD1 heterotetramer forms a Fe-S scaffold complex, mediating the de novo assembly of an Fe-S cluster and its transfer to target apoproteins. Required for biogenesis and export of both ribosomal subunits, which may reflect a role in assembly of the Fe/S clusters in RLI1, a protein which performs rRNA processing and ribosome export. The chain is Cytosolic Fe-S cluster assembly factor NBP35 from Candida albicans (strain SC5314 / ATCC MYA-2876) (Yeast).